A 189-amino-acid polypeptide reads, in one-letter code: HTH-type transcriptional repressor LfrR (189 aa).

The HTH tetR-type domain occupies 12-70 (ERTRRAILDAAMLVLADHPTAALGDIAAAAGVGRSTVHRYYPERTDLLRALARHVHDLS). A DNA-binding region (H-T-H motif) is located at residues 33–52 (ALGDIAAAAGVGRSTVHRYY). Positions 70–71 (SN) are proflavine binding.

In terms of assembly, homodimer. Forms a structurally asymmetric homodimer exhibiting local unfolding and a blocked drug-binding site.

With respect to regulation, repressor activity is regulated by binding of different substrates of the LfrA multidrug efflux pump, such as acriflavine, proflavine, ethidium bromide and rhodamine 123. Binding of these ligands causes the dissociation of LfrR from the promoter, inducing lfrA expression. Its function is as follows. Represses the transcription of the lfrRA operon by binding directly to the promoter region of lfrR-lfrA. Binds specifically to a 143-bp region upstream of the lfrR gene. The chain is HTH-type transcriptional repressor LfrR from Mycolicibacterium smegmatis (strain ATCC 700084 / mc(2)155) (Mycobacterium smegmatis).